The primary structure comprises 192 residues: Elongation factor P (192 aa).

This sequence belongs to the elongation factor P family.

It is found in the cytoplasm. Its pathway is protein biosynthesis; polypeptide chain elongation. In terms of biological role, involved in peptide bond synthesis. Stimulates efficient translation and peptide-bond synthesis on native or reconstituted 70S ribosomes in vitro. Probably functions indirectly by altering the affinity of the ribosome for aminoacyl-tRNA, thus increasing their reactivity as acceptors for peptidyl transferase. The sequence is that of Elongation factor P from Borrelia hermsii (strain HS1 / DAH).